A 575-amino-acid chain; its full sequence is UvrABC system protein C (575 aa).

A GIY-YIG domain is found at 15–90 (AEPGVYQFEA…IKRHQPRYNV (76 aa)). A UVR domain is found at 198–233 (GVLAEPLRREMETAAASQAFERAASLRDRLEAVETF).

Belongs to the UvrC family. In terms of assembly, interacts with UvrB in an incision complex.

It localises to the cytoplasm. The UvrABC repair system catalyzes the recognition and processing of DNA lesions. UvrC both incises the 5' and 3' sides of the lesion. The N-terminal half is responsible for the 3' incision and the C-terminal half is responsible for the 5' incision. In Natronomonas pharaonis (strain ATCC 35678 / DSM 2160 / CIP 103997 / JCM 8858 / NBRC 14720 / NCIMB 2260 / Gabara) (Halobacterium pharaonis), this protein is UvrABC system protein C.